Consider the following 232-residue polypeptide: Ribosomal RNA small subunit methyltransferase G (232 aa).

S-adenosyl-L-methionine-binding positions include Gly-75, Phe-80, 126–127 (AE), and Arg-143.

It belongs to the methyltransferase superfamily. RNA methyltransferase RsmG family.

Its subcellular location is the cytoplasm. Its function is as follows. Specifically methylates the N7 position of a guanine in 16S rRNA. The sequence is that of Ribosomal RNA small subunit methyltransferase G from Fusobacterium nucleatum subsp. nucleatum (strain ATCC 25586 / DSM 15643 / BCRC 10681 / CIP 101130 / JCM 8532 / KCTC 2640 / LMG 13131 / VPI 4355).